A 209-amino-acid chain; its full sequence is HTLV-1 basic zipper factor (209 aa).

A disordered region spans residues 41 to 165 (EEEETVLDGL…KEKMQELGVD (125 aa)). 2 stretches are compositionally biased toward basic and acidic residues: residues 72 to 87 (PRGE…AEEK) and 94 to 160 (REKE…EKMQ). Short sequence motifs (nuclear localization signal) lie at residues 87-92 (KRKRKK), 116-120 (RRKRA), and 137-141 (RRERK).

The protein belongs to the HTLV-1 HBZ protein family. In terms of assembly, interacts with host ATF4; this interaction inhibits viral RNA transcriptional activation by preventing ATF4 binding to Tax-responsive elements. Interacts with host CREB1; this interaction inhibits host CREB1 transcriptional activity. Interacts with host JUN, JUNB and JUND. Interacts with host EP300 and CREBBP; these interactions inhibit the association of the coactivators with the viral promoter. Interacts with host UBR5; this interaction regulates HBZ protein stability. Interacts with XRCC5 and XRCC6. Interacts with IRF7 and IKBKE; this interaction modulates host interferon signaling. Post-translationally, ubiquitinated by host E3 ligase UBR5 leading to HBZ degradation.

The protein resides in the host nucleus. Enhances viral infectivity and persistence, and facilitates proliferation of HTLV-1-infected lymphocytes. Mechanistically, inhibits Tax-mediated viral replication and NF-kappa-B activation. Plays a role in allowing infected T-cells to escape the cytotoxic T-lymphocyte response by maintaining low levels of viral protein production. Also inhibits host EP300 histone acetyltransferase (HAT) activity, reducing levels of acetylated histone H3 at 'Lys-18' (H3K18ac) in infected cells. Contributes to the accumulation of chromosomal abnormalities by inhibiting double-stranded DNA breaks (DSB) repair through the NHEJ pathway. Participates in the modulation of host immune response at multiple levels contributing to abnormal interferon signaling and viral pathogenesis. This chain is HTLV-1 basic zipper factor (HBZ), found in Human T-cell leukemia virus 1 (isolate Caribbea HS-35 subtype A) (HTLV-1).